A 316-amino-acid polypeptide reads, in one-letter code: MKWREIAITTRQENADAMAEIFEAVGAMGMVIEDPQLIASYIESNVWDLHDVEIPDVPEGMIRVKTYLAIDNTLEERLAALQEELSARERSEKWPAHAWTMTDLHEDDWAHAWKAFFKPEKVGRRVVIRPTWEEYVPKEDDLVISIDPGMAFGTGTHPTTVMCIRALEDYVHAEAHVLDVGTGSGVLSIAAALLGAKRVLAVDNDPVAVATAQENVILNQVDEIVEVRRNDLLSGLSEQADILVANIIADVIIRLAPQAAALLAPEGIMIASGIIQNRLDDVVAAMTEKGFSIEELISHGEWAAIVARRAGVSAEG.

Thr-160, Gly-181, Asp-203, and Asn-246 together coordinate S-adenosyl-L-methionine.

Belongs to the methyltransferase superfamily. PrmA family.

It localises to the cytoplasm. It catalyses the reaction L-lysyl-[protein] + 3 S-adenosyl-L-methionine = N(6),N(6),N(6)-trimethyl-L-lysyl-[protein] + 3 S-adenosyl-L-homocysteine + 3 H(+). Its function is as follows. Methylates ribosomal protein L11. This Heliobacterium modesticaldum (strain ATCC 51547 / Ice1) protein is Ribosomal protein L11 methyltransferase.